Here is a 79-residue protein sequence, read N- to C-terminus: Acyl carrier protein (79 aa).

Positions 2-77 (ESIEQRVKKI…QAVDYINSHG (76 aa)) constitute a Carrier domain. S37 carries the O-(pantetheine 4'-phosphoryl)serine modification.

Belongs to the acyl carrier protein (ACP) family. 4'-phosphopantetheine is transferred from CoA to a specific serine of apo-ACP by AcpS. This modification is essential for activity because fatty acids are bound in thioester linkage to the sulfhydryl of the prosthetic group.

The protein localises to the cytoplasm. It functions in the pathway lipid metabolism; fatty acid biosynthesis. Functionally, carrier of the growing fatty acid chain in fatty acid biosynthesis. The chain is Acyl carrier protein from Bordetella parapertussis (strain 12822 / ATCC BAA-587 / NCTC 13253).